The primary structure comprises 277 residues: Zinc finger protein 511 (277 aa).

3 consecutive C2H2-type zinc fingers follow at residues 96–121 (FRCH…NALH), 123–146 (NVCS…LEWH), and 160–185 (YECL…IRTH). The disordered stretch occupies residues 225–244 (ESSESMDFSLTPEPVETEPM).

Belongs to the krueppel C2H2-type zinc-finger protein family.

Its subcellular location is the nucleus. May be involved in transcriptional regulation. The sequence is that of Zinc finger protein 511 (znf511) from Danio rerio (Zebrafish).